A 231-amino-acid polypeptide reads, in one-letter code: Orotidine 5'-phosphate decarboxylase (231 aa).

Residues Asp11, Lys33, 60–69 (DLKFHDIPNT), Thr120, Arg181, Gln190, Gly210, and Arg211 each bind substrate. The active-site Proton donor is the Lys62.

Belongs to the OMP decarboxylase family. Type 1 subfamily. In terms of assembly, homodimer.

It carries out the reaction orotidine 5'-phosphate + H(+) = UMP + CO2. It participates in pyrimidine metabolism; UMP biosynthesis via de novo pathway; UMP from orotate: step 2/2. Catalyzes the decarboxylation of orotidine 5'-monophosphate (OMP) to uridine 5'-monophosphate (UMP). The sequence is that of Orotidine 5'-phosphate decarboxylase from Photobacterium profundum (strain SS9).